Here is a 935-residue protein sequence, read N- to C-terminus: MAASRLDFGEVETFLDRHPELFEDYLMRKGKQELVDKWLQRHSSGQGASDLRPALAGASSLAQSSARGSTGIGGGAGPQGSANSHPASGGGESAGVPLSPSWASGSRGDGNLQRRASQKELRKSFARSKAIHVNRTYDEQVTSRAQEPLSSVRRRALLRKASSLPPTTAHILSALLESRVNLPQYPPTAIDYKCHLKKHNERQFFLELVKDISNDLDLTSLSYKILIFVCLMVDADRCSLFLVEGAAAGKKTLVSKFFDVHAGTPLLPCSTTENSNEVQVPWGKGIIGYVGEHGETVNIPDAYQDRRFNDEIDKLTGYKTKSLLCMPIRNSDGEIIGVAQAINKVPEGAPFTEDDEKVMQMYLPFCGIAISNAQLFAASRKEYERSRALLEVVNDLFEEQTDLEKIVKKIMHRAQTLLKCERCSVLLLEDIESPVVKFTKSFELMSPKCSADAENSFKESVEKSSYSDWLINNSIAELVASTGLPVNVSDAYQDPRFDAEADQISGFHIRSVLCVPIWNSNHQIIGVAQVLNRLDGKPFDDADQRLFEAFVIFCGLGINNTIMYDQVKKSWAKQSVALDVLSYHATCSKAEVDKFKAANIPLVSELAIDDIHFDDFSLDVDAMITAALRMFMELGMVQKFKIDYETLCRWLLTVRKNYRMVLYHNWRHAFNVCQLMFAMLTTAGFQEILTEVEILAVIVGCLCHDLDHRGTNNAFQAKSDSALAQLYGTSATLEHHHFNHAVMILQSEGHNIFANLSSKEYSDLMQLLKQSILATDLTLYFERRTEFFELVSKGAYDWSITSHRDVFRSMLMTACDLGAVTKPWEISRQVAELVTSEFFEQGDRERSELKLTPSAIFDRNRKDELPRLQLEWIDSICMPLYQALVKVNAKLKPMLDSVAANRRKWEELHQKRLQVSAASPVPSSPSPAVAGEDRL.

Residues 41–125 (RHSSGQGASD…ASQKELRKSF (85 aa)) are disordered. Low complexity predominate over residues 54–69 (ALAGASSLAQSSARGS). Phosphoserine occurs at positions 162, 163, and 239. 2 GAF domains span residues 217 to 370 (DLTS…GIAI) and 402 to 558 (DLEK…GLGI). Residue serine 424 coordinates 3',5'-cyclic GMP. A PDEase domain is found at 588–912 (SKAEVDKFKA…RKWEELHQKR (325 aa)). Histidine 664 serves as the catalytic Proton donor. 4 residues coordinate a divalent metal cation: histidine 668, histidine 704, aspartate 705, and aspartate 816. The interval 915 to 935 (VSAASPVPSSPSPAVAGEDRL) is disordered.

This sequence belongs to the cyclic nucleotide phosphodiesterase family. A divalent metal cation serves as cofactor. Isoform 1 is expressed in brain, heart, kidney and liver, but not in prostate. Isoform 2 is specifically expressed in testis. Isoform 3 is expressed in various tissues including brain, lung, skeletal muscle, spleen, testis and prostate.

Its subcellular location is the cytoplasm. The protein localises to the cytosol. The catalysed reaction is 3',5'-cyclic GMP + H2O = GMP + H(+). It catalyses the reaction 3',5'-cyclic AMP + H2O = AMP + H(+). Inhibited by 3-isobutyl-1-methylxanthine (IBMX), zaprinast and dipyridamole. cGMP acts as an allosteric activator. In terms of biological role, plays a role in signal transduction by regulating the intracellular concentration of cyclic nucleotides cAMP and cGMP. Catalyzes the hydrolysis of both cAMP and cGMP to 5'-AMP and 5'-GMP, respectively. The protein is Dual 3',5'-cyclic-AMP and -GMP phosphodiesterase 11A of Rattus norvegicus (Rat).